The following is a 478-amino-acid chain: Crt homolog 3 (478 aa).

The tract at residues 1–30 (MGSDERKPLLSINDGDDDFNHQDVSTKTPP) is disordered. Residues 1–52 (MGSDERKPLLSINDGDDDFNHQDVSTKTPPIKKESLSNKFKSFLKKSMTKET) are Cytoplasmic-facing. Residues 53–73 (LPILIYVLLYIISGVINVVLL) form a helical membrane-spanning segment. Residues 74 to 83 (KKLMIKFVNY) lie on the Vacuolar side of the membrane. The chain crosses the membrane as a helical span at residues 84-104 (GFFLSQITNYGYLPIFLVAMW). Over 105-124 (YKMYCTSDVPKETRNFPQYK) the chain is Cytoplasmic. Residues 125-145 (FVIMGLLDAINGFFVVIGGVS) form a helical membrane-spanning segment. Over 146 to 149 (TSGP) the chain is Vacuolar. Residues 150-170 (LQQLLNQAIIPFTMIASFIFL) form a helical membrane-spanning segment. Over 171-178 (RERYSLFQ) the chain is Cytoplasmic. The chain crosses the membrane as a helical span at residues 179–199 (LGGAAVILGGVIVSLIPSLVG). Residues 200-205 (GSSGGN) are Vacuolar-facing. Residues 206-226 (ILFYNFFYLISVIPGALSNVY) form a helical membrane-spanning segment. The Cytoplasmic segment spans residues 227–237 (KDIAFQSIDMD). Residues 238–258 (VWYLQFWDCLYQSLFGSILFP) traverse the membrane as a helical segment. Residues 259–322 (VNNWLPPPAT…FVCDDCHNTW (64 aa)) are Vacuolar-facing. The N-linked (GlcNAc...) asparagine glycan is linked to Asn296. Residues 323-343 (IIVLIYMTVNIAYNIFILLVL) form a helical membrane-spanning segment. Over 344–352 (KHAGATVYS) the chain is Cytoplasmic. Residues 353-373 (IANTVILPLTNIFFSIHFIMG) form a helical membrane-spanning segment. At 374 to 376 (AAT) the chain is on the vacuolar side. Residues 377 to 397 (TPFSALSVAGLLLILFGLGGY) traverse the membrane as a helical segment. Over 398 to 478 (RIGSMIKKPP…RYRATNIINN (81 aa)) the chain is Cytoplasmic. A disordered region spans residues 404–446 (KKPPPDSKKDSEQQGGEGGAGDGDSSDNKNNLGDSAEIPQQIQ). The segment covering 406–415 (PPPDSKKDSE) has biased composition (basic and acidic residues).

The protein belongs to the CRT-like transporter family.

The protein localises to the vacuole membrane. Its function is as follows. Nutrient transporter. Involved in maintaining the osmotic homeostasis of the digestive vacuole. In Dictyostelium discoideum (Social amoeba), this protein is Crt homolog 3 (crtp3).